Here is a 192-residue protein sequence, read N- to C-terminus: MIYFGRSIDNHYTTMMTKTLEIDLRSAEGLKLNRRPIKKKTFAVVKIDEKCRKSNLDESRRSNPTWNYKSEMPINGNEQFIFIEVFYRTGSGHDKKIGEAKIPTNDFMGRYSPEGHLNFLSYRLRDEFGDKCGIVNLSILVKSDPTRDYGACSSQAAVTGLWRPRLETASIDGYGGRTVTGVPVWGLYQRQF.

The C2 domain maps to 1 to 119 (MIYFGRSIDN…RYSPEGHLNF (119 aa)).

Interacts with BON1 (via VWA domain), BON2 and BON3. Expressed in roots, leaves, stems and flowers.

The protein localises to the membrane. In terms of biological role, negative regulator of cell death and defense responses. Exhibits calcium-dependent phospholipid binding properties. The protein is BON1-associated protein 1 (BAP1) of Arabidopsis thaliana (Mouse-ear cress).